We begin with the raw amino-acid sequence, 441 residues long: Lysine histidine transporter-like 2 (441 aa).

Over 1 to 32 the chain is Cytoplasmic; that stretch reads MEKSQSSPTKDASTKQKNVDDWLPITSSRNAK. Residues 33 to 53 form a helical membrane-spanning segment; the sequence is WWYSAFHNVTAMVGAGVLSLP. The Extracellular segment spans residues 54–58; that stretch reads YAMSN. Residues 59 to 79 traverse the membrane as a helical segment; sequence LGWGPGVTIMIMSWLITFYTL. The Cytoplasmic segment spans residues 80 to 110; the sequence is WQMVQMHEMVPGKRFDRYHELGQHAFGEKLG. Residues 111–131 form a helical membrane-spanning segment; the sequence is LWIVVPQQLIVEVGVDIVYMV. At 132–155 the chain is on the extracellular side; it reads TGGKSLKKIHDLLCTDCKNIRTTY. Helical transmembrane passes span 156-176 and 177-197; these read WIMIFASIHFVLAHLPNFNSI and SIVSLAAAVMSLSYSTIAWAT. The Extracellular segment spans residues 198 to 222; that stretch reads SVKKGVHPNVDYSSRASTTSGNVFN. A helical transmembrane segment spans residues 223–243; the sequence is FLNALGDVAFAYAGHNVVLEI. Over 244–264 the chain is Cytoplasmic; sequence QATIPSTPEKPSKIAMWKGVV. Residues 265–285 traverse the membrane as a helical segment; it reads VAYIVVAICYFPVAFVCYYIF. The Extracellular segment spans residues 286–300; that stretch reads GNSVDDNILMTLEKP. The chain crosses the membrane as a helical span at residues 301 to 321; that stretch reads IWLIAIANAFVVVHVIGSYQI. Topologically, residues 322 to 347 are cytoplasmic; that stretch reads YAMPVFDMLETFLVKKMMFAPSFKLR. A helical membrane pass occupies residues 348–370; sequence FITRTLYVAFTMFVAICIPFFGG. The Extracellular segment spans residues 371–373; it reads LLG. A helical transmembrane segment spans residues 374-396; that stretch reads FFGGFAFAPTTYYLPCIMWLCIK. At 397–406 the chain is on the cytoplasmic side; it reads KPKKYGLSWC. A helical transmembrane segment spans residues 407–427; it reads INWFCIVVGVILTILAPIGGL. The Extracellular segment spans residues 428 to 441; sequence RTIIISAKNYEFFS.

Belongs to the amino acid/polyamine transporter 2 family. Amino acid/auxin permease (AAAP) (TC 2.A.18.2) subfamily.

The protein resides in the cell membrane. Its function is as follows. Amino acid transporter. This Arabidopsis thaliana (Mouse-ear cress) protein is Lysine histidine transporter-like 2.